The primary structure comprises 655 residues: Ribonuclease 3 (655 aa).

Disordered regions lie at residues M1–K148 and L171–L376. Residues M1–I400 are unknown. Basic residues predominate over residues T8–K20. Basic and acidic residues-rich tracts occupy residues N21 to T34 and D69 to E89. Over residues N92 to K102 the composition is skewed to low complexity. A compositionally biased stretch (basic residues) spans Q103–K115. Residues A135–K148 are compositionally biased toward polar residues. The span at N206 to K223 shows a compositional bias: low complexity. Composition is skewed to polar residues over residues P229–T242 and P250–P259. 2 stretches are compositionally biased toward basic and acidic residues: residues T260–E274 and D298–K309. A compositionally biased stretch (low complexity) spans N310 to N332. The segment covering S333–Q350 has biased composition (basic and acidic residues). Over residues K351–N360 the composition is skewed to low complexity. The interval Y401–K655 is RNase 3. In terms of domain architecture, RNase III spans L432–G556. A Mg(2+)-binding site is contributed by E472. Residue D476 is part of the active site. Residues D542 and E545 each contribute to the Mg(2+) site. E545 is an active-site residue. Positions D582–G649 constitute a DRBM domain.

This sequence belongs to the ribonuclease III family. In terms of assembly, homodimer. Mg(2+) serves as cofactor.

It localises to the cytoplasm. It carries out the reaction Endonucleolytic cleavage to 5'-phosphomonoester.. Digests double-stranded RNA. Involved in the processing of primary rRNA transcript to yield the immediate precursors to the large and small rRNAs (23S and 16S). Processes some mRNAs, and tRNAs when they are encoded in the rRNA operon. Processes pre-crRNA and tracrRNA of type II CRISPR loci if present in the organism. This is Ribonuclease 3 (rnc) from Mycoplasmoides gallisepticum (strain R(low / passage 15 / clone 2)) (Mycoplasma gallisepticum).